Consider the following 229-residue polypeptide: Large ribosomal subunit protein uL1 (229 aa).

The protein belongs to the universal ribosomal protein uL1 family. In terms of assembly, part of the 50S ribosomal subunit.

Its function is as follows. Binds directly to 23S rRNA. The L1 stalk is quite mobile in the ribosome, and is involved in E site tRNA release. Functionally, protein L1 is also a translational repressor protein, it controls the translation of the L11 operon by binding to its mRNA. The polypeptide is Large ribosomal subunit protein uL1 (Streptococcus thermophilus (strain CNRZ 1066)).